A 757-amino-acid chain; its full sequence is Centrosomal protein of 68 kDa (757 aa).

Composition is skewed to basic and acidic residues over residues 1–17 and 86–96; these read MALGEEKAEAEASEDTK and ANREPVAERSE. Disordered regions lie at residues 1–47, 67–158, 192–259, 311–480, 509–551, and 597–618; these read MALG…RLEA, WIGT…PSLA, QPSS…GGDA, PGPQ…ESDD, PTGD…SGDP, and LDRWPFSDPDVEGQLPRKGGEQ. The span at 125–144 shows a compositional bias: polar residues; that stretch reads LSSSEEFPQTLSLPRTTTIC. Low complexity-rich tracts occupy residues 192-206 and 224-240; these read QPSSCSISASSTGSS and VSSSLEPVVPQEPSSVV. A Phosphoserine; by PLK1 modification is found at Ser332. Positions 339–355 are enriched in polar residues; that stretch reads FSVSPASTLKSPTNVSP. Basic and acidic residues-rich tracts occupy residues 405–432 and 439–456; these read GSRDARWERREPALRGAKDRLTIGKHLD and RTRDRGWPSPRPEREKRT. The segment covering 457 to 467 has biased composition (polar residues); sequence SQSARRPTCTE. Phosphoserine occurs at positions 472 and 478. Over residues 524 to 543 the composition is skewed to low complexity; that stretch reads SDGPASFPSSSSQSQLPPGA.

Interacts with CNTLN; the interaction recruits CEP68 to the centrosome. Interacts with the SCF(FBXW11) complex which contains SKP1, CUL1 and FBXW11; the interaction is probably mediated by FBXW11 and the complex also contains CDK5RAP2 and PCNT. Also interacts with F-box protein BTRC. Interacts with serine/threonine-protein kinase PLK1; the interaction leads to phosphorylation of CEP68 and its subsequent degradation. Interacts with NEK2; the interaction leads to phosphorylation of CEP68. In terms of processing, phosphorylation by PLK1 is required for binding to BTRC in prometaphase. Phosphorylated directly or indirectly by NEK2. NEK2-mediated phosphorylation promotes CEP68 dissociation from the centrosome and its degradation at the onset of mitosis. Post-translationally, ubiquitinated and targeted for proteasomal degradation in early mitosis by the SCF(BTRC) and/or SCF(FBXW11) E3 ubiquitin-protein ligase complexes. Degradation is complete by prometaphase and is required for removal of CDK5RAP2 from the peripheral pericentriolar material and subsequent centriole separation.

Its subcellular location is the cytoplasm. The protein resides in the cytoskeleton. It localises to the microtubule organizing center. It is found in the centrosome. In terms of biological role, involved in maintenance of centrosome cohesion, probably as part of a linker structure which prevents centrosome splitting. Required for localization of CDK5RAP2 to the centrosome during interphase. Contributes to CROCC/rootletin filament formation. The polypeptide is Centrosomal protein of 68 kDa (CEP68) (Homo sapiens (Human)).